A 114-amino-acid polypeptide reads, in one-letter code: Large ribosomal subunit protein uL22 (114 aa).

This sequence belongs to the universal ribosomal protein uL22 family. Part of the 50S ribosomal subunit.

Its function is as follows. This protein binds specifically to 23S rRNA; its binding is stimulated by other ribosomal proteins, e.g. L4, L17, and L20. It is important during the early stages of 50S assembly. It makes multiple contacts with different domains of the 23S rRNA in the assembled 50S subunit and ribosome. Functionally, the globular domain of the protein is located near the polypeptide exit tunnel on the outside of the subunit, while an extended beta-hairpin is found that lines the wall of the exit tunnel in the center of the 70S ribosome. The protein is Large ribosomal subunit protein uL22 of Methylacidiphilum infernorum (isolate V4) (Methylokorus infernorum (strain V4)).